Reading from the N-terminus, the 740-residue chain is Zinc finger CCCH domain-containing protein 14 (740 aa).

4 disordered regions span residues 82-240, 254-314, 390-426, and 444-469; these read SNKQ…NIKG, VSAG…DDAV, ITPS…DDEE, and SFRD…HHST. 2 stretches are compositionally biased toward basic and acidic residues: residues 87–158 and 176–185; these read ETSK…EIQR and EHVRARGEKH. Residues 186 to 200 are compositionally biased toward basic residues; the sequence is DRHHHKDHRRGRSHE. A compositionally biased stretch (polar residues) spans 204 to 214; that stretch reads ITSTIVRQASA. The segment covering 393-409 has biased composition (polar residues); the sequence is SRDSTPTDDSPTMQKWN. The segment covering 414–426 has biased composition (acidic residues); the sequence is IGDDSEESEDDEE. 2 consecutive C3H1-type zinc fingers follow at residues 499–522 and 523–543; these read HVKE…MHPT and TNCK…IHPP. The disordered stretch occupies residues 623–661; it reads IKKKPAPGAESEKKEEKSDENESKAEEPKAEVAPVQPKP. Residues 632-652 are compositionally biased toward basic and acidic residues; sequence ESEKKEEKSDENESKAEEPKA. 3 consecutive C3H1-type zinc fingers follow at residues 668-691, 674-691, and 693-709; these read LHSM…KHPK, CRYA…KHPK, and CRFG…FYHK.

It belongs to the ZC3H14 family.

The protein resides in the nucleus. It localises to the cytoplasm. Its function is as follows. RNA-binding protein involved in the biogenesis of circular RNAs (circRNAs), which are produced by back-splicing circularization of pre-mRNAs. This is Zinc finger CCCH domain-containing protein 14 (sut-2) from Caenorhabditis elegans.